The following is a 762-amino-acid chain: MQVRTLLTLGKKKVIGNRQCILSLYRKYSNVQSRKAEDQLLRQIFDDQNIAVNQITKRNGIQGVGLFRNHFLSDKDTGFLRLAETASEKCKAVIEDLLLEDTEDGSIVVSKFDRISNLLCSVIDLFEFVRCAHPDKMVVMKAEEAYSYLFELMNTLNTHQGLYEKLKCSLQQTPTLKDTDPEAYTVGRVFLQDFEKSGVNLESSKRNSFVKKSSESATLGRAFFNNSMNRPQRYLTISKQRLAGSDPYFVRSLSKNDKNFIMIPTVGYEGTQALISVANPDVRKEIYMEGHKGTVEEVELLNSYLRSKAEVAKLVGKSSFADLQLIDKMANAPKHVVEFLENLSLKNSSVLKKILNNLALMKKKELNLNFLPSFDVWDREYYTARYKQSLINQKPSLNPSITNYRRFFSVGTVIQGLSRLFSSLYGLRFVPADISPGEVWHPDVNKVNVYNENDHVMGVIYFDLFARTGKTDGAAHFTIRSSRELDLTSFDDSISLGFDDATNIRVKDNKRYQIPVISLLCNFVRSSGMDPTFLDLWDVKTLFHEMGHAMHSILGHTKYQNLAGTRCATDFVELPSIIMEFFMSNPAVLPLYARYEGTEIPLPVQVLNHHNMVENSSAPLDLQSQICMAMVDQLFHSKVVLDPSFNSIDEVTNVTRKFSGFESAPPAAWYLQFSHLYGYSATYYSYIFDTVLASLIFSKLFAGNPLSREAGEKFRKAILRWGGSRSPWECVAEALEQPILATGGEEAMRRIGSEGIKATSTF.

The transit peptide at 1 to 28 (MQVRTLLTLGKKKVIGNRQCILSLYRKY) directs the protein to the mitochondrion. H544 provides a ligand contact to Zn(2+). E545 is an active-site residue. Zn(2+)-binding residues include H548 and H551.

Belongs to the peptidase M3 family. Zn(2+) serves as cofactor.

It is found in the mitochondrion matrix. The enzyme catalyses Release of an N-terminal octapeptide as second stage of processing of some proteins imported into the mitochondrion.. In terms of biological role, cleaves proteins, imported into the mitochondrion, to their mature size. While most mitochondrial precursor proteins are processed to the mature form in one step by mitochondrial processing peptidase (MPP), the sequential cleavage by MIP of an octapeptide after initial processing by MPP is a required step for a subgroup of nuclear-encoded precursor proteins destined for the matrix or the inner membrane. This is Mitochondrial intermediate peptidase (oct1) from Schizosaccharomyces pombe (strain 972 / ATCC 24843) (Fission yeast).